A 367-amino-acid chain; its full sequence is Putative zinc metalloprotease mll0638 (367 aa).

Histidine 20 contacts Zn(2+). Residue glutamate 21 is part of the active site. Zn(2+) is bound at residue histidine 24. Transmembrane regions (helical) follow at residues 108–130 (ATVV…VLFA), 291–313 (LGFE…LNLL), and 343–365 (MAYR…NDLF). The region spanning 121 to 196 (TIVVFSVLFA…ITFVMLRDGK (76 aa)) is the PDZ domain.

This sequence belongs to the peptidase M50B family. The cofactor is Zn(2+).

Its subcellular location is the cell inner membrane. The protein is Putative zinc metalloprotease mll0638 of Mesorhizobium japonicum (strain LMG 29417 / CECT 9101 / MAFF 303099) (Mesorhizobium loti (strain MAFF 303099)).